The following is a 495-amino-acid chain: ATP synthase subunit beta, chloroplastic (495 aa).

ATP is bound at residue 172 to 179 (GGAGVGKT).

This sequence belongs to the ATPase alpha/beta chains family. In terms of assembly, F-type ATPases have 2 components, CF(1) - the catalytic core - and CF(0) - the membrane proton channel. CF(1) has five subunits: alpha(3), beta(3), gamma(1), delta(1), epsilon(1). CF(0) has four main subunits: a(1), b(1), b'(1) and c(9-12).

The protein resides in the plastid. It is found in the chloroplast thylakoid membrane. The catalysed reaction is ATP + H2O + 4 H(+)(in) = ADP + phosphate + 5 H(+)(out). Produces ATP from ADP in the presence of a proton gradient across the membrane. The catalytic sites are hosted primarily by the beta subunits. In Bowiea volubilis (Climbing onion), this protein is ATP synthase subunit beta, chloroplastic.